Reading from the N-terminus, the 287-residue chain is Elongation factor Ts (287 aa).

An involved in Mg(2+) ion dislocation from EF-Tu region spans residues 80-83 (TDFL).

The protein belongs to the EF-Ts family.

Its subcellular location is the cytoplasm. Its function is as follows. Associates with the EF-Tu.GDP complex and induces the exchange of GDP to GTP. It remains bound to the aminoacyl-tRNA.EF-Tu.GTP complex up to the GTP hydrolysis stage on the ribosome. The sequence is that of Elongation factor Ts from Pseudomonas entomophila (strain L48).